Here is a 43-residue protein sequence, read N- to C-terminus: DeltaKappa-actitoxin-Avd4b (43 aa).

3 cysteine pairs are disulfide-bonded: cysteine 4–cysteine 39, cysteine 6–cysteine 32, and cysteine 22–cysteine 40.

This sequence belongs to the sea anemone type 3 (BDS) potassium channel toxin family.

The protein resides in the secreted. It localises to the nematocyst. Acts as a gating modifier on both Kv and Nav ion channels. Voltage-dependently inhibits voltage-gated potassium channels Kv3 (Kv3.1/KCNC1, Kv3.2/KCNC2 and Kv3.4/KCNC4). Slows inactivation of the voltage-gated sodium channel Nav1.7/SCN9A. Inhibits all Kv3.1, Kv3.2 and Kv3.4 by about 50% when tested at a voltage of +40 mV. May act by binding residues in voltage-sensing domains S3b and S4 of Kv3. Tests have been done on human Nav1.7/SCN9A and rat SCG neurons that mostly carry Nav1.7 channels (EC(50)=300 nM). This toxin also reduces blood pressure. In Anemonia sulcata (Mediterranean snakelocks sea anemone), this protein is DeltaKappa-actitoxin-Avd4b.